We begin with the raw amino-acid sequence, 387 residues long: S-adenosylmethionine synthase (387 aa).

H19 contributes to the ATP binding site. D21 is a binding site for Mg(2+). E47 lines the K(+) pocket. An L-methionine-binding site is contributed by Q103. Residues 103 to 113 (QSPDIAQGVEL) form a flexible loop region. Residues 167-169 (DMK), 233-234 (RF), D242, 248-249 (RK), A265, and K269 each bind ATP. L-methionine is bound at residue D242. K273 provides a ligand contact to L-methionine.

The protein belongs to the AdoMet synthase family. In terms of assembly, homotetramer; dimer of dimers. It depends on Mg(2+) as a cofactor. Requires K(+) as cofactor.

Its subcellular location is the cytoplasm. It catalyses the reaction L-methionine + ATP + H2O = S-adenosyl-L-methionine + phosphate + diphosphate. The protein operates within amino-acid biosynthesis; S-adenosyl-L-methionine biosynthesis; S-adenosyl-L-methionine from L-methionine: step 1/1. Catalyzes the formation of S-adenosylmethionine (AdoMet) from methionine and ATP. The overall synthetic reaction is composed of two sequential steps, AdoMet formation and the subsequent tripolyphosphate hydrolysis which occurs prior to release of AdoMet from the enzyme. This Mycoplasma mycoides subsp. mycoides SC (strain CCUG 32753 / NCTC 10114 / PG1) protein is S-adenosylmethionine synthase.